The chain runs to 66 residues: Large ribosomal subunit protein uL29 (66 aa).

Belongs to the universal ribosomal protein uL29 family.

This Ruegeria pomeroyi (strain ATCC 700808 / DSM 15171 / DSS-3) (Silicibacter pomeroyi) protein is Large ribosomal subunit protein uL29.